The chain runs to 152 residues: Transcriptional regulator MraZ (152 aa).

2 SpoVT-AbrB domains span residues 5 to 52 (ATLV…PLPE) and 81 to 124 (ASEC…DETT).

It belongs to the MraZ family. Forms oligomers.

Its subcellular location is the cytoplasm. The protein localises to the nucleoid. In terms of biological role, negatively regulates its own expression and that of the subsequent genes in the proximal part of the division and cell wall (dcw) gene cluster. Acts by binding directly to DNA. May also regulate the expression of genes outside the dcw cluster. This Salmonella gallinarum (strain 287/91 / NCTC 13346) protein is Transcriptional regulator MraZ.